The primary structure comprises 417 residues: Gamma-glutamyl phosphate reductase (417 aa).

It belongs to the gamma-glutamyl phosphate reductase family.

The protein localises to the cytoplasm. It carries out the reaction L-glutamate 5-semialdehyde + phosphate + NADP(+) = L-glutamyl 5-phosphate + NADPH + H(+). It participates in amino-acid biosynthesis; L-proline biosynthesis; L-glutamate 5-semialdehyde from L-glutamate: step 2/2. In terms of biological role, catalyzes the NADPH-dependent reduction of L-glutamate 5-phosphate into L-glutamate 5-semialdehyde and phosphate. The product spontaneously undergoes cyclization to form 1-pyrroline-5-carboxylate. The protein is Gamma-glutamyl phosphate reductase of Streptococcus agalactiae serotype III (strain NEM316).